A 244-amino-acid polypeptide reads, in one-letter code: Triosephosphate isomerase (244 aa).

8–10 (NWK) is a substrate binding site. Residue His-93 is the Electrophile of the active site. Glu-161 serves as the catalytic Proton acceptor. Substrate is bound by residues Gly-167, Ser-206, and 227–228 (GG).

The protein belongs to the triosephosphate isomerase family. Homodimer.

It is found in the cytoplasm. It carries out the reaction D-glyceraldehyde 3-phosphate = dihydroxyacetone phosphate. The protein operates within carbohydrate biosynthesis; gluconeogenesis. It participates in carbohydrate degradation; glycolysis; D-glyceraldehyde 3-phosphate from glycerone phosphate: step 1/1. Functionally, involved in the gluconeogenesis. Catalyzes stereospecifically the conversion of dihydroxyacetone phosphate (DHAP) to D-glyceraldehyde-3-phosphate (G3P). The sequence is that of Triosephosphate isomerase from Deinococcus radiodurans (strain ATCC 13939 / DSM 20539 / JCM 16871 / CCUG 27074 / LMG 4051 / NBRC 15346 / NCIMB 9279 / VKM B-1422 / R1).